Reading from the N-terminus, the 441-residue chain is Histidinol dehydrogenase (441 aa).

NAD(+) is bound by residues Tyr136, Gln197, and Asn220. Substrate contacts are provided by Ser243, Gln265, and His268. 2 residues coordinate Zn(2+): Gln265 and His268. Residues Glu333 and His334 each act as proton acceptor in the active site. The substrate site is built by His334, Asp367, Glu421, and His426. Asp367 provides a ligand contact to Zn(2+). His426 contacts Zn(2+).

This sequence belongs to the histidinol dehydrogenase family. Requires Zn(2+) as cofactor.

It catalyses the reaction L-histidinol + 2 NAD(+) + H2O = L-histidine + 2 NADH + 3 H(+). Its pathway is amino-acid biosynthesis; L-histidine biosynthesis; L-histidine from 5-phospho-alpha-D-ribose 1-diphosphate: step 9/9. In terms of biological role, catalyzes the sequential NAD-dependent oxidations of L-histidinol to L-histidinaldehyde and then to L-histidine. This is Histidinol dehydrogenase from Pseudomonas fluorescens (strain Pf0-1).